We begin with the raw amino-acid sequence, 616 residues long: Spastin (616 aa).

A disordered region spans residues 1–43 (MNSPGGRGKKKGSGGASNPVPPRPPPPCLAPAPPAAGPAPPPE). A required for nuclear localization region spans residues 1 to 50 (MNSPGGRGKKKGSGGASNPVPPRPPPPCLAPAPPAAGPAPPPESPHKRNL). Residues 1-56 (MNSPGGRGKKKGSGGASNPVPPRPPPPCLAPAPPAAGPAPPPESPHKRNLYYFSYP) are Cytoplasmic-facing. Residues 1–80 (MNSPGGRGKK…LGLLFVWLCQ (80 aa)) are required for interaction with ATL1. Residues 1-194 (MNSPGGRGKK…LVMAKDRLQL (194 aa)) are required for midbody localization. Residues 1 to 300 (MNSPGGRGKK…GTPKTNRTNK (300 aa)) are required for interaction with RTN1. The short motif at 4-11 (PGGRGKKK) is the Nuclear localization signal element. Pro residues predominate over residues 19–43 (PVPPRPPPPCLAPAPPAAGPAPPPE). Positions 50–87 (LYYFSYPLFVGFALLRLVAFHLGLLFVWLCQRFSRALM) are required for interaction with SSNA1 and microtubules. The helical intramembrane region spans 57 to 77 (LFVGFALLRLVAFHLGLLFVW). Residues 59–67 (VGFALLRLV) carry the Nuclear export signal motif. Over 78-616 (LCQRFSRALM…WNKDFGDTTV (539 aa)) the chain is Cytoplasmic. The segment at 112-196 (EAERVRVFHK…MAKDRLQLLE (85 aa)) is sufficient for interaction with CHMP1B. The tract at residues 114-200 (ERVRVFHKQA…RLQLLEKMQP (87 aa)) is required for interaction with microtubules. Positions 120–195 (HKQAFEYISI…VMAKDRLQLL (76 aa)) constitute an MIT domain. Residues 224-266 (HLQSESGAVPKRKDPLTHTSNSLPRSKTVMKTGSAGLSGHHRA) form a disordered region. Positions 228–616 (ESGAVPKRKD…WNKDFGDTTV (389 aa)) are sufficient for microtubule severing. Over residues 240–254 (THTSNSLPRSKTVMK) the composition is skewed to polar residues. 2 positions are modified to phosphoserine: serine 245 and serine 268. Residues 270-328 (SGLSMVSGVKQGSGPAPTTHKGTPKTNRTNKPSTPTTATRKKKDLKNFRNVDSNLANLI) are required for interaction with microtubules and microtubule severing. The segment at 278–312 (VKQGSGPAPTTHKGTPKTNRTNKPSTPTTATRKKK) is disordered. The segment covering 289–307 (HKGTPKTNRTNKPSTPTTA) has biased composition (polar residues). Phosphothreonine is present on threonine 306. Positions 309–312 (RKKK) match the Nuclear localization signal motif. The interval 310–312 (KKK) is required for interaction with microtubules. Residue 382-389 (GPPGNGKT) participates in ATP binding. At serine 597 the chain carries Phosphoserine.

This sequence belongs to the AAA ATPase family. Spastin subfamily. As to quaternary structure, homohexamer. Mostly monomeric, but assembles into hexameric structure for short periods of time. Oligomerization seems to be a prerequisite for catalytic activity. Binding to ATP in a cleft between two adjacent subunits stabilizes the homohexameric form. Binds to microtubules at least in part via the alpha-tubulin and beta-tubulin tails. The hexamer adopts a ring conformation through which microtubules pass prior to being severed. Does not interact strongly with tubulin heterodimers. Interacts (via MIT domain) with CHMP1B; the interaction is direct. Interacts with SSNA1. Interacts with ATL1. Interacts with RTN1. Interacts with ZFYVE27. Isoform 1 but not isoform 3 interacts with RTN2. Interacts with REEP1. Interacts (via MIT domain) with IST1. In terms of tissue distribution, expressed in brain, heart, kidney, liver, lung, pancreas, placenta and skeletal muscle. The short isoforms may predominate in brain and spinal cord.

It is found in the membrane. The protein resides in the endoplasmic reticulum. It localises to the midbody. Its subcellular location is the cytoplasm. The protein localises to the cytoskeleton. It is found in the microtubule organizing center. The protein resides in the centrosome. It localises to the perinuclear region. Its subcellular location is the nucleus. The protein localises to the spindle. It is found in the cell projection. The protein resides in the axon. It localises to the endoplasmic reticulum membrane. Its subcellular location is the nucleus membrane. The protein localises to the lipid droplet. It is found in the endosome. It carries out the reaction n ATP + n H2O + a microtubule = n ADP + n phosphate + (n+1) alpha/beta tubulin heterodimers.. Allosteric enzyme with a cooperative mechanism; at least two neighbor subunits influence each other strongly in spastin hexamers. Microtubule binding promotes cooperative interactions among spastin subunits. ATP-bound enzyme interacts strongly and cooperatively with microtubules; this interaction stimulates ATP hydrolysis. ATP-dependent microtubule severing protein that specifically recognizes and cuts microtubules that are polyglutamylated. Preferentially recognizes and acts on microtubules decorated with short polyglutamate tails: severing activity increases as the number of glutamates per tubulin rises from one to eight, but decreases beyond this glutamylation threshold. Severing activity is not dependent on tubulin acetylation or detyrosination. Microtubule severing promotes reorganization of cellular microtubule arrays and the release of microtubules from the centrosome following nucleation. It is critical for the biogenesis and maintenance of complex microtubule arrays in axons, spindles and cilia. SPAST is involved in abscission step of cytokinesis and nuclear envelope reassembly during anaphase in cooperation with the ESCRT-III complex. Recruited at the midbody, probably by IST1, and participates in membrane fission during abscission together with the ESCRT-III complex. Recruited to the nuclear membrane by IST1 and mediates microtubule severing, promoting nuclear envelope sealing and mitotic spindle disassembly during late anaphase. Required for membrane traffic from the endoplasmic reticulum (ER) to the Golgi and endosome recycling. Recruited by IST1 to endosomes and regulates early endosomal tubulation and recycling by mediating microtubule severing. Probably plays a role in axon growth and the formation of axonal branches. Functionally, involved in lipid metabolism by regulating the size and distribution of lipid droplets. The protein is Spastin of Homo sapiens (Human).